A 1184-amino-acid polypeptide reads, in one-letter code: MHGHRASASAIHPDYPVTHRESTWRRATLIVQGSTATVDDTLRPAVPARGLQAAEIAREIATEIATAVAEVVTTVTVLEIDVTTAETTAAMTVETTAETAAAHVHHPVARGHRTAEMIVTAETTAGTTAGTTVAMIGTGVEVPRHVGQARDVLQPHRPRTSAATREERVNPEKQKEDKLAERAAKLLEWKKRKEAERLAQEKAGTPGSGASPAGSVPSTPAVAATPPPREAKPTVAKSKVPKPATEKVKQKQPEKSSFKLDESAAARPLIAKPAGKPVAIAAASKYHHIDYKCSNQLTQTDGAAAAATTKANGNIGSFGLKTKSTAEEDISSKALLDDEIDTGKRKLQALPVFATHDEPETTAGVEDDAAMSDIGTDDDETNAQLQAKLQSRRAELSHDQAADKDTNMEEVPTADNTGDQMDVDDNAGAEEDDVDPLDAFMADLSVPQQPSRAAPQGETMFNDDLEPEQTAVEGEDLLALRAAKKKKKEVPTINHEKVEYEPFRKDFYTEPAEITQMSAEDVADLRHELDGIKVKPDDVPRPVTKWAQMGLLQQTMDVFTRVGYARPTAIQAQAIPIAESGRDLIGVAKTGSGKTLAFGIPMIRHVLDQRPLKPADGPIGLILAPTRELSLQIVNELKPFLNASGITIKCAYGGQPISDQIAMIKRGGIHILCATAGRLIDLLQSNSGRVLSFRRITYVVLDEADRMFDMGFEPQVMKILASIRPDRQTILFSATFPKTMAALARKALDKPAEVIIGGRSKVAPEITQHITIVPPSYEKKIAKLLHHLGQTFSDDENAQVLIFTERQETAEDLLSKLFKAKYFAVNTIHGAKDQTDRNEAINEFKQGLLNILIATSVAARGLDVPGLALVYNFDCPTHLEDYVHRCGRTGRAGNKGLAVTLIENPGQERFAVHIVKALKESGAEVPDDLQAMANAFHEKVKSGTEKYYNVGFKGKGLDELDASRALDKKREKRALKLGDDDASDDEPDLPKLKKPEASGPGVAKSTNGDAAAEPVQDEPAWKKLLLGKIVVNKTERAETGKPTTAKERAMAAARKIDGNLSRKGTVHAGQPIDNKGPDAGLYHSTLEINDFPQKARWAVTNRTNVAKILDATGVSITTKGNFYGPGKEPGETDLPKLYILVEGDTEGVVTQAMLELTRLLTDATVAAEEAASTRGPTGRYSVMS.

4 disordered regions span residues 148–178 (QARD…KEDK), 197–262 (RLAQ…KLDE), 356–377 (HDEP…IGTD), and 389–433 (LQSR…EEDD). Residues 164–178 (TREERVNPEKQKEDK) show a composition bias toward basic and acidic residues. Residues 203-224 (AGTPGSGASPAGSVPSTPAVAA) show a composition bias toward low complexity. Basic and acidic residues predominate over residues 244–262 (ATEKVKQKQPEKSSFKLDE). The span at 365–377 (VEDDAAMSDIGTD) shows a compositional bias: acidic residues. Positions 392–407 (RRAELSHDQAADKDTN) are enriched in basic and acidic residues. Residues 421 to 433 (MDVDDNAGAEEDD) show a composition bias toward acidic residues. A Q motif motif is present at residues 544–572 (TKWAQMGLLQQTMDVFTRVGYARPTAIQA). The 180-residue stretch at 575–754 (IPIAESGRDL…RKALDKPAEV (180 aa)) folds into the Helicase ATP-binding domain. Residue 588-595 (AKTGSGKT) participates in ATP binding. Residues 702-705 (DEAD) carry the DEAD box motif. In terms of domain architecture, Helicase C-terminal spans 780 to 933 (KIAKLLHHLG…EVPDDLQAMA (154 aa)). Residues 973–1016 (RALKLGDDDASDDEPDLPKLKKPEASGPGVAKSTNGDAAAEPVQ) are disordered.

Belongs to the DEAD box helicase family. DDX46/PRP5 subfamily.

It is found in the nucleus. It catalyses the reaction ATP + H2O = ADP + phosphate + H(+). ATP-dependent RNA helicase involved spliceosome assembly and in nuclear splicing. Catalyzes an ATP-dependent conformational change of U2 snRNP. Bridges U1 and U2 snRNPs and enables stable U2 snRNP association with intron RNA. The protein is Pre-mRNA-processing ATP-dependent RNA helicase PRP5 (PRP5) of Phaeosphaeria nodorum (strain SN15 / ATCC MYA-4574 / FGSC 10173) (Glume blotch fungus).